Here is a 269-residue protein sequence, read N- to C-terminus: MADNTMTTTQRNIMAFDPKDHEIALSTEDLHVFYGKSEAISEGDLQFERYKISALIGPSGSGKSTYLRSLNRMNDRIATVKGKIMYRGLDINSNDIDVYEMRRHIGMVFQRPNPFAKSIYENIAFALRQRGMNKKQDLDEIVERSLRQAAMWDQVKDDLNKSALALSGGQQQRLCIARAIAIKPDILLLDEPASALDPVSTSQIEDTLLELKQNYTIIIVTHNMQQASRISDYTAFFNLGKVLEYSETGEIFTNPQVDLTNDYISGNFG.

Positions 25 to 264 (LSTEDLHVFY…PQVDLTNDYI (240 aa)) constitute an ABC transporter domain. Position 57–64 (57–64 (GPSGSGKS)) interacts with ATP.

It belongs to the ABC transporter superfamily. Phosphate importer (TC 3.A.1.7) family. In terms of assembly, the complex is composed of two ATP-binding proteins (PstB), two transmembrane proteins (PstC and PstA) and a solute-binding protein (PstS).

The protein resides in the cell membrane. The catalysed reaction is phosphate(out) + ATP + H2O = ADP + 2 phosphate(in) + H(+). In terms of biological role, part of the ABC transporter complex PstSACB involved in phosphate import. Responsible for energy coupling to the transport system. This Lactiplantibacillus plantarum (strain ATCC BAA-793 / NCIMB 8826 / WCFS1) (Lactobacillus plantarum) protein is Phosphate import ATP-binding protein PstB 1.